The chain runs to 539 residues: Chaperonin GroEL (539 aa).

ATP is bound by residues Thr-29–Pro-32, Asp-86–Thr-90, Gly-413, Asn-477–Ala-479, and Asp-493.

Belongs to the chaperonin (HSP60) family. Forms a cylinder of 14 subunits composed of two heptameric rings stacked back-to-back. Interacts with the co-chaperonin GroES.

The protein localises to the cytoplasm. It catalyses the reaction ATP + H2O + a folded polypeptide = ADP + phosphate + an unfolded polypeptide.. Functionally, together with its co-chaperonin GroES, plays an essential role in assisting protein folding. The GroEL-GroES system forms a nano-cage that allows encapsulation of the non-native substrate proteins and provides a physical environment optimized to promote and accelerate protein folding. This Leifsonia xyli subsp. xyli (strain CTCB07) protein is Chaperonin GroEL.